The primary structure comprises 171 residues: 3-hydroxydecanoyl-[acyl-carrier-protein] dehydratase (171 aa).

Residue His70 is part of the active site.

The protein belongs to the thioester dehydratase family. FabA subfamily. In terms of assembly, homodimer.

The protein resides in the cytoplasm. The enzyme catalyses a (3R)-hydroxyacyl-[ACP] = a (2E)-enoyl-[ACP] + H2O. It carries out the reaction (3R)-hydroxydecanoyl-[ACP] = (2E)-decenoyl-[ACP] + H2O. It catalyses the reaction (2E)-decenoyl-[ACP] = (3Z)-decenoyl-[ACP]. It participates in lipid metabolism; fatty acid biosynthesis. Necessary for the introduction of cis unsaturation into fatty acids. Catalyzes the dehydration of (3R)-3-hydroxydecanoyl-ACP to E-(2)-decenoyl-ACP and then its isomerization to Z-(3)-decenoyl-ACP. Can catalyze the dehydratase reaction for beta-hydroxyacyl-ACPs with saturated chain lengths up to 16:0, being most active on intermediate chain length. In Shewanella pealeana (strain ATCC 700345 / ANG-SQ1), this protein is 3-hydroxydecanoyl-[acyl-carrier-protein] dehydratase.